Consider the following 102-residue polypeptide: Small ribosomal subunit protein uS10 (102 aa).

Residues M34–F61 form a disordered region.

It belongs to the universal ribosomal protein uS10 family. Part of the 30S ribosomal subunit.

Its function is as follows. Involved in the binding of tRNA to the ribosomes. The chain is Small ribosomal subunit protein uS10 from Methanococcus aeolicus (strain ATCC BAA-1280 / DSM 17508 / OCM 812 / Nankai-3).